A 54-amino-acid chain; its full sequence is Large ribosomal subunit protein bL33 (54 aa).

The protein belongs to the bacterial ribosomal protein bL33 family.

This is Large ribosomal subunit protein bL33 from Symbiobacterium thermophilum (strain DSM 24528 / JCM 14929 / IAM 14863 / T).